The chain runs to 273 residues: Shikimate dehydrogenase (NADP(+)) (273 aa).

Shikimate contacts are provided by residues 15 to 17 (SLS) and Thr62. The active-site Proton acceptor is Lys66. Glu78 is a binding site for NADP(+). Shikimate-binding residues include Asn87 and Asp102. Residues 126–130 (GAGGA), 150–155 (NRTIEK), and Ile217 each bind NADP(+). Residue Tyr219 participates in shikimate binding. Gly240 is an NADP(+) binding site.

This sequence belongs to the shikimate dehydrogenase family. Homodimer.

It carries out the reaction shikimate + NADP(+) = 3-dehydroshikimate + NADPH + H(+). It participates in metabolic intermediate biosynthesis; chorismate biosynthesis; chorismate from D-erythrose 4-phosphate and phosphoenolpyruvate: step 4/7. Involved in the biosynthesis of the chorismate, which leads to the biosynthesis of aromatic amino acids. Catalyzes the reversible NADPH linked reduction of 3-dehydroshikimate (DHSA) to yield shikimate (SA). This Nitrosopumilus maritimus (strain SCM1) protein is Shikimate dehydrogenase (NADP(+)).